The following is a 627-amino-acid chain: 5-aminolevulinate synthase, non-specific, mitochondrial (627 aa).

The transit peptide at 1–58 (MDVIVRRCPFLARVPQAFFQQSKKSLAVYAQRCPFMMELASKPMAPSLARALCSSSSS) directs the protein to the mitochondrion. R204, S321, and K340 together coordinate substrate. S373, H401, and T429 together coordinate pyridoxal 5'-phosphate. K432 is an active-site residue. At K432 the chain carries N6-(pyridoxal phosphate)lysine. Positions 461 and 462 each coordinate pyridoxal 5'-phosphate. Residue T549 participates in substrate binding.

It belongs to the class-II pyridoxal-phosphate-dependent aminotransferase family. Homodimer. Requires pyridoxal 5'-phosphate as cofactor.

The protein localises to the mitochondrion inner membrane. The enzyme catalyses succinyl-CoA + glycine + H(+) = 5-aminolevulinate + CO2 + CoA. The protein operates within porphyrin-containing compound metabolism; protoporphyrin-IX biosynthesis; 5-aminolevulinate from glycine: step 1/1. Its function is as follows. Catalyzes the pyridoxal 5'-phosphate (PLP)-dependent condensation of succinyl-CoA and glycine to form aminolevulinic acid (ALA), with CoA and CO2 as by-products. In Opsanus tau (Oyster toadfish), this protein is 5-aminolevulinate synthase, non-specific, mitochondrial (alas1).